The chain runs to 113 residues: Urease subunit beta (113 aa).

The protein belongs to the urease beta subunit family. Heterotrimer of UreA (gamma), UreB (beta) and UreC (alpha) subunits. Three heterotrimers associate to form the active enzyme.

The protein localises to the cytoplasm. It catalyses the reaction urea + 2 H2O + H(+) = hydrogencarbonate + 2 NH4(+). Its pathway is nitrogen metabolism; urea degradation; CO(2) and NH(3) from urea (urease route): step 1/1. This Cyanothece sp. (strain PCC 7425 / ATCC 29141) protein is Urease subunit beta.